The primary structure comprises 158 residues: SsrA-binding protein (158 aa).

A compositionally biased stretch (basic and acidic residues) spans 133–152 (KRQTLREQQDNREAQREMRE). The segment at 133–158 (KRQTLREQQDNREAQREMRERNRRRG) is disordered.

The protein belongs to the SmpB family.

Its subcellular location is the cytoplasm. Functionally, required for rescue of stalled ribosomes mediated by trans-translation. Binds to transfer-messenger RNA (tmRNA), required for stable association of tmRNA with ribosomes. tmRNA and SmpB together mimic tRNA shape, replacing the anticodon stem-loop with SmpB. tmRNA is encoded by the ssrA gene; the 2 termini fold to resemble tRNA(Ala) and it encodes a 'tag peptide', a short internal open reading frame. During trans-translation Ala-aminoacylated tmRNA acts like a tRNA, entering the A-site of stalled ribosomes, displacing the stalled mRNA. The ribosome then switches to translate the ORF on the tmRNA; the nascent peptide is terminated with the 'tag peptide' encoded by the tmRNA and targeted for degradation. The ribosome is freed to recommence translation, which seems to be the essential function of trans-translation. The polypeptide is SsrA-binding protein (Pseudarthrobacter chlorophenolicus (strain ATCC 700700 / DSM 12829 / CIP 107037 / JCM 12360 / KCTC 9906 / NCIMB 13794 / A6) (Arthrobacter chlorophenolicus)).